We begin with the raw amino-acid sequence, 178 residues long: Large ribosomal subunit protein uL6 (178 aa).

This sequence belongs to the universal ribosomal protein uL6 family. Part of the 50S ribosomal subunit.

Its function is as follows. This protein binds to the 23S rRNA, and is important in its secondary structure. It is located near the subunit interface in the base of the L7/L12 stalk, and near the tRNA binding site of the peptidyltransferase center. The polypeptide is Large ribosomal subunit protein uL6 (Gluconobacter oxydans (strain 621H) (Gluconobacter suboxydans)).